Consider the following 265-residue polypeptide: DNA repair protein RecO (265 aa).

It belongs to the RecO family.

Involved in DNA repair and RecF pathway recombination. This Mycolicibacterium paratuberculosis (strain ATCC BAA-968 / K-10) (Mycobacterium paratuberculosis) protein is DNA repair protein RecO.